We begin with the raw amino-acid sequence, 139 residues long: uncharacterized protein (139 aa).

This is an uncharacterized protein from Sinorhizobium fredii (strain NBRC 101917 / NGR234).